Consider the following 388-residue polypeptide: NADH-quinone oxidoreductase subunit D 2 (388 aa).

The protein belongs to the complex I 49 kDa subunit family. NDH-1 is composed of 14 different subunits. Subunits NuoB, C, D, E, F, and G constitute the peripheral sector of the complex.

Its subcellular location is the cell membrane. It catalyses the reaction a quinone + NADH + 5 H(+)(in) = a quinol + NAD(+) + 4 H(+)(out). Its function is as follows. NDH-1 shuttles electrons from NADH, via FMN and iron-sulfur (Fe-S) centers, to quinones in the respiratory chain. The immediate electron acceptor for the enzyme in this species is believed to be a menaquinone. Couples the redox reaction to proton translocation (for every two electrons transferred, four hydrogen ions are translocated across the cytoplasmic membrane), and thus conserves the redox energy in a proton gradient. This Salinispora tropica (strain ATCC BAA-916 / DSM 44818 / JCM 13857 / NBRC 105044 / CNB-440) protein is NADH-quinone oxidoreductase subunit D 2.